A 1256-amino-acid chain; its full sequence is SNF2 domain-containing protein CLASSY 1 (1256 aa).

Disordered stretches follow at residues 269-290 (ELRR…EIQP) and 448-467 (GNVV…VSRE). Residues 278–290 (GRPERYGDSEIQP) are compositionally biased toward basic and acidic residues. The segment covering 451-463 (VHKRNGPHSRIRS) has biased composition (basic residues). The Helicase ATP-binding domain maps to 699–898 (DPSSDKIGGC…FNTLCLARPK (200 aa)). 712-719 (HTPGAGKT) provides a ligand contact to ATP. A DEAH box motif is present at residues 849–852 (DEGH). In terms of domain architecture, Helicase C-terminal spans 1061-1222 (FVLNLVFRVV…EFVEDPSQWQ (162 aa)).

Belongs to the helicase family. As to quaternary structure, interacts with NRPD1, NRPD3 and SHH1.

It is found in the nucleus. Its subcellular location is the nucleoplasm. It localises to the nucleolus. Functionally, probable chromatin remodeling factor. Required for the initial establishment of DNA methylation and for accumulation of 24-nt siRNAs. May act on RNA templates by remodeling ribonucleoprotein structures and thereby influencing the availability of the RNA to polymerases. This chain is SNF2 domain-containing protein CLASSY 1 (CLSY1), found in Arabidopsis thaliana (Mouse-ear cress).